We begin with the raw amino-acid sequence, 905 residues long: Alanine--tRNA ligase (905 aa).

Histidine 569, histidine 573, cysteine 693, and histidine 697 together coordinate Zn(2+).

This sequence belongs to the class-II aminoacyl-tRNA synthetase family. Requires Zn(2+) as cofactor.

It localises to the cytoplasm. The catalysed reaction is tRNA(Ala) + L-alanine + ATP = L-alanyl-tRNA(Ala) + AMP + diphosphate. Functionally, catalyzes the attachment of alanine to tRNA(Ala) in a two-step reaction: alanine is first activated by ATP to form Ala-AMP and then transferred to the acceptor end of tRNA(Ala). Also edits incorrectly charged Ser-tRNA(Ala) and Gly-tRNA(Ala) via its editing domain. In Roseiflexus sp. (strain RS-1), this protein is Alanine--tRNA ligase.